Consider the following 116-residue polypeptide: Toxin ICK-10 (116 aa).

An N-terminal signal peptide occupies residues 1 to 19 (MMKLYSLVIIATLAAAAFA). 4 disulfides stabilise this stretch: cysteine 56–cysteine 71, cysteine 64–cysteine 77, cysteine 68–cysteine 113, and cysteine 70–cysteine 84.

The protein belongs to the neurotoxin 25 family. ICK-8 subfamily. As to expression, expressed by the venom gland.

The protein localises to the secreted. In terms of biological role, ion channel inhibitor. This is Toxin ICK-10 from Trittame loki (Brush-footed trapdoor spider).